The following is a 310-amino-acid chain: CCR4-NOT transcription complex subunit 7 (310 aa).

Asp-51, Glu-53, Asp-172, and Asp-245 together coordinate a divalent metal cation.

It belongs to the CAF1 family. In terms of assembly, component of the CCR4-NOT complex at least composed of ccf-1, ccr-4 and let-711, which is required for germ cell development in hermaphrodites. Within the complex interacts with let-711. Highly expressed in the germline. In particular, highly expressed in germ cells that enter meiosis and progress through the pachytene stage.

It is found in the nucleus. It localises to the cytoplasm. It carries out the reaction Exonucleolytic cleavage of poly(A) to 5'-AMP.. Catalytic component of the CCR4-NOT complex which is one of the major cellular mRNA deadenylases and is linked to various cellular processes including bulk mRNA degradation, miRNA-mediated repression, translational repression during translational initiation and general transcription regulation. Within the complex, plays a role in miRNA-mediated deadenylation in embryos. Within the complex promotes germ cell development and fertility in hermaphrodites. Additional complex functions may be a consequence of its influence on mRNA expression. The sequence is that of CCR4-NOT transcription complex subunit 7 from Caenorhabditis elegans.